The sequence spans 426 residues: Glutamate-1-semialdehyde 2,1-aminomutase (426 aa).

Lys265 is subject to N6-(pyridoxal phosphate)lysine.

This sequence belongs to the class-III pyridoxal-phosphate-dependent aminotransferase family. HemL subfamily. As to quaternary structure, homodimer. It depends on pyridoxal 5'-phosphate as a cofactor.

Its subcellular location is the cytoplasm. The catalysed reaction is (S)-4-amino-5-oxopentanoate = 5-aminolevulinate. Its pathway is porphyrin-containing compound metabolism; protoporphyrin-IX biosynthesis; 5-aminolevulinate from L-glutamyl-tRNA(Glu): step 2/2. The chain is Glutamate-1-semialdehyde 2,1-aminomutase from Salmonella schwarzengrund (strain CVM19633).